Consider the following 557-residue polypeptide: Aerobic glycerol-3-phosphate dehydrogenase (557 aa).

FAD is bound at residue 21-49; the sequence is DLVIIGGGITGAGIALDASERGMKVALVE.

Belongs to the FAD-dependent glycerol-3-phosphate dehydrogenase family. Requires FAD as cofactor.

The protein resides in the cytoplasm. The catalysed reaction is a quinone + sn-glycerol 3-phosphate = dihydroxyacetone phosphate + a quinol. It functions in the pathway polyol metabolism; glycerol degradation via glycerol kinase pathway; glycerone phosphate from sn-glycerol 3-phosphate (aerobic route): step 1/1. The chain is Aerobic glycerol-3-phosphate dehydrogenase (glpD) from Staphylococcus aureus (strain bovine RF122 / ET3-1).